The following is a 1065-amino-acid chain: MPLDKTIKKVLIIGSGPNNIGQAAEFDYSGTQACKAVKEEGIETVLVNSNPATIMTDSHIADKVYIEPLTEEAVEKIIEKERPDGILAGFGGQTALNLAMNLNDAGVLDKYNVRLLGINSEAIKKAEDREEFKNLMEEIDEPVPKSIIATHIDECIDFVNKFGLPVIIRPAFTLGGTGGGIASTMEELKEICDRGIKMSPIGQILLEQSVAGWKELEYEVMRDAKDNCIIVCNMENLDPVGVHTGDSIVTAPSQTLTDKEYHMLRHSALKIIRNLKIEGGCNIQFALNPKSNDYIVIEVNPRVSRSSALASKAAGYPIAKIAAKIAVGYSLDELKNYVTKNSSACFEPALDYVVVKIPKWPFDKFNTAERHLGTQMKATGEVMAIDRDFESALLKAVTSLEGKISGLRLEKFEYTTVRELLEKIKKQDDERIFAIAEAFRRGVDVKQIHEVTEIDNWYLNGINRIIDMEKELQDKNNKDKDKSIIKAKKMGFTVAEIARITSLEEGKIKNILNVNNVKPVFKMVDTCSGEFEAETPYYYSSYENEDENEVTDDKKIVVIGSGPIRIGQGIEFDYCCVHGVWAIKEAGYKSIIINNNPETVSTDFDTADKLYFESLYIDNVMNIIEKEKPEGVIVQFGGQTAINLADKLYKNGVKILGTSFESIDLAEDREKFSELLKELNIPQAKGMAVTSMEEAYEAVKEIGYPVIVRPSYVIGGRAMQVVYDKLALQKYMTEAVTLSTEHPVLIDKYIKGTEIEVDTISDGENILIPGIMEHIERTGVHSGDSITMYPYHTLPKEVVDKLVKYTKSLAKALEVKGLMNIQYVYDGENVYVIEVNPRASRTVPILSKVTGVPMVKLAVEILTGKNLKELGYGVDLKKDNKLYAVKVPVFSNEKLANVDIYLGPEMRSTGEVMGIDSDFEVAIYKGFRAAGIEVPKDGGNLYVSIKDVDKQESVPIIKKYTEFGYKIYASLGTGKFLQKQGIDCEVLRTDDLMKAIGDGKINLIINSPTRGNTVGTRGFSIRRKAAEYKVGAFTCIDTAKAFLTAIKVKREEAKVEYRAMKEYFK.

Residues 1–401 (MPLDKTIKKV…ALLKAVTSLE (401 aa)) are carboxyphosphate synthetic domain. Arg-129, Arg-169, Gly-175, Gly-176, Gln-208, Val-210, Glu-215, Gly-241, Val-242, His-243, Gln-284, and Glu-298 together coordinate ATP. In terms of domain architecture, ATP-grasp 1 spans 133 to 327 (KNLMEEIDEP…IAKIAAKIAV (195 aa)). Residues Gln-284, Glu-298, and Asn-300 each contribute to the Mg(2+) site. 3 residues coordinate Mn(2+): Gln-284, Glu-298, and Asn-300. Positions 402 to 548 (GKISGLRLEK…YSSYENEDEN (147 aa)) are oligomerization domain. A carbamoyl phosphate synthetic domain region spans residues 549–931 (EVTDDKKIVV…AIYKGFRAAG (383 aa)). One can recognise an ATP-grasp 2 domain in the interval 673 to 863 (SELLKELNIP…MVKLAVEILT (191 aa)). ATP contacts are provided by Arg-709, Lys-748, Ile-750, Glu-754, Gly-779, Val-780, His-781, Ser-782, Gln-822, and Glu-834. Residues Gln-822, Glu-834, and Asn-836 each coordinate Mg(2+). Residues Gln-822, Glu-834, and Asn-836 each contribute to the Mn(2+) site. Positions 932-1065 (IEVPKDGGNL…EYRAMKEYFK (134 aa)) constitute an MGS-like domain. Residues 932–1065 (IEVPKDGGNL…EYRAMKEYFK (134 aa)) are allosteric domain.

This sequence belongs to the CarB family. In terms of assembly, composed of two chains; the small (or glutamine) chain promotes the hydrolysis of glutamine to ammonia, which is used by the large (or ammonia) chain to synthesize carbamoyl phosphate. Tetramer of heterodimers (alpha,beta)4. The cofactor is Mg(2+). Requires Mn(2+) as cofactor.

It catalyses the reaction hydrogencarbonate + L-glutamine + 2 ATP + H2O = carbamoyl phosphate + L-glutamate + 2 ADP + phosphate + 2 H(+). The catalysed reaction is hydrogencarbonate + NH4(+) + 2 ATP = carbamoyl phosphate + 2 ADP + phosphate + 2 H(+). It functions in the pathway amino-acid biosynthesis; L-arginine biosynthesis; carbamoyl phosphate from bicarbonate: step 1/1. Its pathway is pyrimidine metabolism; UMP biosynthesis via de novo pathway; (S)-dihydroorotate from bicarbonate: step 1/3. Large subunit of the glutamine-dependent carbamoyl phosphate synthetase (CPSase). CPSase catalyzes the formation of carbamoyl phosphate from the ammonia moiety of glutamine, carbonate, and phosphate donated by ATP, constituting the first step of 2 biosynthetic pathways, one leading to arginine and/or urea and the other to pyrimidine nucleotides. The large subunit (synthetase) binds the substrates ammonia (free or transferred from glutamine from the small subunit), hydrogencarbonate and ATP and carries out an ATP-coupled ligase reaction, activating hydrogencarbonate by forming carboxy phosphate which reacts with ammonia to form carbamoyl phosphate. The sequence is that of Carbamoyl phosphate synthase large chain from Clostridium acetobutylicum (strain ATCC 824 / DSM 792 / JCM 1419 / IAM 19013 / LMG 5710 / NBRC 13948 / NRRL B-527 / VKM B-1787 / 2291 / W).